A 21-amino-acid chain; its full sequence is Helicopsin (21 aa).

Belongs to the CRISP family. In terms of processing, contains 8 disulfide bonds. Expressed by the salivary gland.

It localises to the secreted. Functionally, helicopsin exhibits robust neurotoxic activity as shown by immediate death (about 8 minutes) of mice due to respiratory paralysis. This Helicops angulatus (South American water snake) protein is Helicopsin.